Consider the following 423-residue polypeptide: Structure-specific endonuclease subunit SLX1 (423 aa).

A GIY-YIG domain is found at 23 to 105 (AFYCCYLLRS…QNTKVSRHAD (83 aa)). 2 disordered regions span residues 300 to 334 (RRRR…DALQ) and 365 to 406 (AHRP…LGLQ).

Belongs to the SLX1 family. As to quaternary structure, forms a heterodimer with SLX4. The cofactor is a divalent metal cation.

The protein localises to the nucleus. Functionally, catalytic subunit of the SLX1-SLX4 structure-specific endonuclease that resolves DNA secondary structures generated during DNA repair and recombination. Has endonuclease activity towards branched DNA substrates, introducing single-strand cuts in duplex DNA close to junctions with ss-DNA. The polypeptide is Structure-specific endonuclease subunit SLX1 (Paracoccidioides brasiliensis (strain Pb03)).